We begin with the raw amino-acid sequence, 648 residues long: DNA ligase (648 aa).

NAD(+) contacts are provided by residues 63 to 67 and 105 to 106; these read DILYD and ST. The active-site N6-AMP-lysine intermediate is lysine 143. 3 residues coordinate NAD(+): arginine 159, glutamate 190, and lysine 302. Residues cysteine 390, cysteine 393, cysteine 406, and cysteine 412 each contribute to the Zn(2+) site. Positions 570-648 constitute a BRCT domain; that stretch reads SLASPLTGKI…SEQEYLDLIS (79 aa).

The protein belongs to the NAD-dependent DNA ligase family. LigA subfamily. The cofactor is Mg(2+). It depends on Mn(2+) as a cofactor.

The catalysed reaction is NAD(+) + (deoxyribonucleotide)n-3'-hydroxyl + 5'-phospho-(deoxyribonucleotide)m = (deoxyribonucleotide)n+m + AMP + beta-nicotinamide D-nucleotide.. Functionally, DNA ligase that catalyzes the formation of phosphodiester linkages between 5'-phosphoryl and 3'-hydroxyl groups in double-stranded DNA using NAD as a coenzyme and as the energy source for the reaction. It is essential for DNA replication and repair of damaged DNA. This chain is DNA ligase, found in Shewanella baltica (strain OS155 / ATCC BAA-1091).